A 324-amino-acid chain; its full sequence is Methionyl-tRNA formyltransferase (324 aa).

Position 109-112 (S109–P112) interacts with (6S)-5,6,7,8-tetrahydrofolate. Positions L305–T324 are disordered.

The protein belongs to the Fmt family.

The enzyme catalyses L-methionyl-tRNA(fMet) + (6R)-10-formyltetrahydrofolate = N-formyl-L-methionyl-tRNA(fMet) + (6S)-5,6,7,8-tetrahydrofolate + H(+). Functionally, attaches a formyl group to the free amino group of methionyl-tRNA(fMet). The formyl group appears to play a dual role in the initiator identity of N-formylmethionyl-tRNA by promoting its recognition by IF2 and preventing the misappropriation of this tRNA by the elongation apparatus. The chain is Methionyl-tRNA formyltransferase from Nitrosomonas europaea (strain ATCC 19718 / CIP 103999 / KCTC 2705 / NBRC 14298).